A 516-amino-acid chain; its full sequence is Cysteine--tRNA ligase (516 aa).

Cys32 is a Zn(2+) binding site. Residues 34–44 (PTVYMYAHIGN) carry the 'HIGH' region motif. The Zn(2+) site is built by Cys230, His255, and Glu259. Residues 287–291 (KMSKS) carry the 'KMSKS' region motif. ATP is bound at residue Lys290.

This sequence belongs to the class-I aminoacyl-tRNA synthetase family. In terms of assembly, monomer. Requires Zn(2+) as cofactor.

The protein localises to the cytoplasm. It carries out the reaction tRNA(Cys) + L-cysteine + ATP = L-cysteinyl-tRNA(Cys) + AMP + diphosphate. The chain is Cysteine--tRNA ligase from Salinibacter ruber (strain DSM 13855 / M31).